The primary structure comprises 766 residues: Pyrophosphate-energized vacuolar membrane proton pump (766 aa).

Residues 2-8 (GAAILPD) are Intravacuolar-facing. Residues 9–35 (LGTEILIPVCAVIGIAFALFQWLLVSK) traverse the membrane as a helical segment. The Cytoplasmic segment spans residues 36-84 (VKLSAVRDASPNAAAKNGYNDYLIEEEEGINDHNVVVKCAEIQNAISEG). A helical transmembrane segment spans residues 85-114 (ATSFLFTEYKYVGIFMVAFAILIFLFLGSV). The Intravacuolar portion of the chain corresponds to 115-135 (EGFSTSPQACSYDKTKTCKPA). A disulfide bridge connects residues cysteine 124 and cysteine 132. The helical transmembrane segment at 136 to 163 (LATAIFSTVSFLLGGVTSLVSGFLGMKI) threads the bilayer. At 164–186 (ATYANARTTLEARKGVGKAFITA) the chain is on the cytoplasmic side. A helical membrane pass occupies residues 187-216 (FRSGAVMGFLLAANGLLVLYIAINLFKIYY). The Intravacuolar portion of the chain corresponds to 217–219 (GDD). A helical membrane pass occupies residues 220–248 (WGGLFEAITGYGLGGSSMALFGRVGGGIY). The Cytoplasmic segment spans residues 249–286 (TKAADVGADLVGKVERNIPEDDPRNPAVIADNVGDNVG). A substrate-binding site is contributed by lysine 250. The Mg(2+) site is built by aspartate 253, aspartate 257, and aspartate 283. Residues 287 to 312 (DIAGMGSDLFGSYAESSCAALVVASI) traverse the membrane as a helical segment. The Intravacuolar segment spans residues 313-320 (SSFGLNHE). Residues 321-346 (LTAMLYPLIVSSVGILVCLLTTLFAT) form a helical membrane-spanning segment. The Cytoplasmic portion of the chain corresponds to 347–354 (DFFEIKAV). Residues 355–382 (KEIEPALKKQLVISTVLMTIGVAVVSFV) form a helical membrane-spanning segment. At 383–401 (ALPTSFTIFNFGVQKDVKS) the chain is on the intravacuolar side. Residues 402 to 425 (WQLFLCVAVGLWAGLIIGFVTEYY) traverse the membrane as a helical segment. At 426–447 (TSNAYSPVQDVADSCRTGAATN) the chain is on the cytoplasmic side. The helical transmembrane segment at 448-472 (VIFGLALGYKSVIIPIFAIAISIFV) threads the bilayer. At 473 to 478 (SFTFAA) the chain is on the intravacuolar side. The chain crosses the membrane as a helical span at residues 479–505 (MYGIAVAALGMLSTIATGLAIDAYGPI). Residues 506–534 (SDNAGGIAEMAGMSHRIRERTDALDAAGN) lie on the Cytoplasmic side of the membrane. Residues aspartate 507 and asparagine 534 each coordinate Mg(2+). The chain crosses the membrane as a helical span at residues 535–563 (TTAAIGKGFAIGSAALVSLALFGAFVSRA). Residues 564 to 573 (SITTVDVLTP) are Intravacuolar-facing. A helical transmembrane segment spans residues 574 to 602 (KVFIGLIVGAMLPYWFSAMTMKSVGSAAL). Residues 603 to 631 (KMVEEVRRQFNTIPGLMEGTAKPDYATCV) lie on the Cytoplasmic side of the membrane. The chain crosses the membrane as a helical span at residues 632–660 (KISTDASIKEMIPPGALVMLTPLVVGILF). Residue glycine 661 is a topological domain, intravacuolar. Residues 662-689 (VETLSGVLAGSLVSGVQIAISASNTGGA) traverse the membrane as a helical segment. Residues 690 to 732 (WDNAKKYIEAGASEHARSLGPKGSDCHKAAVIGDTIGDPLKDT) are Cytoplasmic-facing. Positions 691 and 727 each coordinate Mg(2+). Lysine 730 is a binding site for substrate. The helical transmembrane segment at 733 to 758 (SGPSLNILIKLMAVESLVFAPFFATH) threads the bilayer. Over 759–765 (GGLLFKI) the chain is Intravacuolar.

The protein belongs to the H(+)-translocating pyrophosphatase (TC 3.A.10) family. K(+)-stimulated subfamily. As to quaternary structure, homodimer.

It is found in the vacuole membrane. It carries out the reaction diphosphate + H2O + H(+)(in) = 2 phosphate + 2 H(+)(out). With respect to regulation, inhibited by excess pyrophosphate as well as excess Mg(2+). Inhibition by ATP, GTP, and CTP is reversed by increasing the Mg(2+) concentration. This suggests that the substrate is a particular metal complex such as MgPPi(2-). Modification of Asp-283 with DCCD abolishes pyrophosphatase activity. In terms of biological role, proton-translocating inorganic pyrophosphatase that contributes to the transtonoplast (from cytosol to vacuole lumen) H(+)-electrochemical potential difference. It establishes a proton gradient of similar and often greater magnitude than the H(+)-ATPase on the same membrane. This is Pyrophosphate-energized vacuolar membrane proton pump from Vigna radiata var. radiata (Mung bean).